Consider the following 340-residue polypeptide: Protein-glutamate methylesterase/protein-glutamine glutaminase 1 (340 aa).

The Response regulatory domain occupies 5 to 122 (KLFIVDDSAL…KVVSELKEKI (118 aa)). D56 is subject to 4-aspartylphosphate. Positions 148 to 340 (GKNGRQLVVI…AIAEEIAANI (193 aa)) constitute a CheB-type methylesterase domain. Catalysis depends on residues S160, H187, and D285.

It belongs to the CheB family. Phosphorylated by CheA. Phosphorylation of the N-terminal regulatory domain activates the methylesterase activity.

Its subcellular location is the cytoplasm. The enzyme catalyses [protein]-L-glutamate 5-O-methyl ester + H2O = L-glutamyl-[protein] + methanol + H(+). It catalyses the reaction L-glutaminyl-[protein] + H2O = L-glutamyl-[protein] + NH4(+). In terms of biological role, involved in chemotaxis. Part of a chemotaxis signal transduction system that modulates chemotaxis in response to various stimuli. Catalyzes the demethylation of specific methylglutamate residues introduced into the chemoreceptors (methyl-accepting chemotaxis proteins or MCP) by CheR. Also mediates the irreversible deamidation of specific glutamine residues to glutamic acid. The chain is Protein-glutamate methylesterase/protein-glutamine glutaminase 1 from Carboxydothermus hydrogenoformans (strain ATCC BAA-161 / DSM 6008 / Z-2901).